We begin with the raw amino-acid sequence, 373 residues long: LIM domain-binding protein 1 (373 aa).

Disordered stretches follow at residues 248 to 297 and 329 to 373; these read PPAE…LSSQ and DAAN…QASQ. The span at 266 to 282 shows a compositional bias: low complexity; sequence SGGSTMSSGGGNTNNSN. A compositionally biased stretch (polar residues) spans 288 to 297; the sequence is PASTFALSSQ. An LIM interaction domain (LID) domain is found at 298–337; it reads DVMVVGEPTLMGGEFGDEDERLITRLENTQFDAANGIDDE.

The protein belongs to the LDB family. In terms of assembly, forms homodimers and heterodimers. Interacts with and activates lhx1/lim1. The stoichiometry of lhx1/lim1 and ldb1 is important for their function and an excess of ldb1 can inhibit lhx1/lim1 function. When bound to lhx1/lim1, escapes degradation by rnf12. Interacts with the N-terminal region of rnf12. Post-translationally, undergoes rnf12-mediated ubiquitin-proteasome-dependent degradation.

Its subcellular location is the nucleus. In terms of biological role, binds to the LIM domain of a wide variety of LIM domain-containing transcription factors. Acts as a coactivator together with otx2 to stimulate lhx1/lim1-mediated activation of the gsc promoter in the Spemann organizer. Acts synergistically with lhx1/lim1 and ssbp in axis formation. In Xenopus tropicalis (Western clawed frog), this protein is LIM domain-binding protein 1.